A 461-amino-acid chain; its full sequence is uncharacterized protein (461 aa).

The tract at residues 86–127 is disordered; it reads KMKPNKDDDEEEDEDDEDDEDDEEEDNEEEDNEEENEITIAP. Residues 92-122 show a composition bias toward acidic residues; sequence DDDEEEDEDDEDDEDDEEEDNEEEDNEEENE. Coiled-coil stretches lie at residues 95–123 and 405–459; these read EEED…ENEI and NKYI…KLKK.

Belongs to the mimivirus L5 family.

This is an uncharacterized protein from Acanthamoeba polyphaga mimivirus (APMV).